We begin with the raw amino-acid sequence, 73 residues long: Translation initiation factor IF-1 (73 aa).

The S1-like domain occupies 1–73 (MAKKDGAIEI…TRGRIVYRYK (73 aa)).

The protein belongs to the IF-1 family. Component of the 30S ribosomal translation pre-initiation complex which assembles on the 30S ribosome in the order IF-2 and IF-3, IF-1 and N-formylmethionyl-tRNA(fMet); mRNA recruitment can occur at any time during PIC assembly.

Its subcellular location is the cytoplasm. One of the essential components for the initiation of protein synthesis. Stabilizes the binding of IF-2 and IF-3 on the 30S subunit to which N-formylmethionyl-tRNA(fMet) subsequently binds. Helps modulate mRNA selection, yielding the 30S pre-initiation complex (PIC). Upon addition of the 50S ribosomal subunit IF-1, IF-2 and IF-3 are released leaving the mature 70S translation initiation complex. The polypeptide is Translation initiation factor IF-1 (Thermobifida fusca (strain YX)).